A 268-amino-acid polypeptide reads, in one-letter code: MERYESLFAQLKERKEGAFVPFVTLGDPGIEQSLKIIDTLIEAGADALELGIPFSDPLADGPTIQNATLRAFAAGVTPAQCFEMLALIRQKHPTIPIGLLMYANLVFNKGIDEFYAECEKVGVDSVLVADVPVEESAPFRQAALRHNVAPIFICPPNADDDLLRQIASYGRGYTYLLSRAGVTGAENRAALPLNHLVAKLKEYNAAPPLQGFGISAPDQVKAAIDAGAAGAISGSAIVKIIEQHINEPEKMLAALKAFVQPMKAATRS.

Residues glutamate 49 and aspartate 60 each act as proton acceptor in the active site.

The protein belongs to the TrpA family. Tetramer of two alpha and two beta chains.

The catalysed reaction is (1S,2R)-1-C-(indol-3-yl)glycerol 3-phosphate + L-serine = D-glyceraldehyde 3-phosphate + L-tryptophan + H2O. It participates in amino-acid biosynthesis; L-tryptophan biosynthesis; L-tryptophan from chorismate: step 5/5. The alpha subunit is responsible for the aldol cleavage of indoleglycerol phosphate to indole and glyceraldehyde 3-phosphate. The polypeptide is Tryptophan synthase alpha chain (Escherichia coli O6:H1 (strain CFT073 / ATCC 700928 / UPEC)).